Consider the following 684-residue polypeptide: Glycine--tRNA ligase beta subunit (684 aa).

The protein belongs to the class-II aminoacyl-tRNA synthetase family. As to quaternary structure, tetramer of two alpha and two beta subunits.

The protein resides in the cytoplasm. It catalyses the reaction tRNA(Gly) + glycine + ATP = glycyl-tRNA(Gly) + AMP + diphosphate. The polypeptide is Glycine--tRNA ligase beta subunit (Pseudomonas aeruginosa (strain LESB58)).